Reading from the N-terminus, the 1368-residue chain is MAVAEAKPQYSHAEKKRFRKSFGKQTDIMPIPNLLEIQLKSYRDFLQTDTKLSEQLNTGLHAAFSSVFPIESFSGNARLEYVGYKLGEPAFDVRECKLRGLTYSAPLRVKIRLVVLDKDASDDPKPIKDIREQDVFMGEIPLMTDVGTFVVNGTERVVVSQLHRSPGVIFEHDKGKTHSSGKLLYSARIIPYRGSWLDFEFDPKDCVYVRIDRRRKLPVTILLRALGYEAEDILNEFFETTCCHLKNGEYHIDLIPQRLRGEIASFDIHVPETGELIVEQGRRITARHIKQMEKSQMQDLVVPRDYLIGKTLAKNIIDTSTGEFLAQANDEITEELLDAMASHGILQIDMIYTNDLDHGSYISDTLKIDPTGSQLEALVEIYRMMRPGEPPTKEAAEALFKNLFFVEERYDLSAVGRMKFNRRVGIKSDEGPGTLTKEDILSVIKTLIDIRNGIGMVDDIDHLGNRRVRSVGEMTENQFRVGLVRVERAVKERLSLVESENLMPQDLINAKPVSAAIKEFFGSSQLSQFMDQVNPLSGVTHKRRVSALGPGGLTRERAGFEVRDVHTTHYGRVCPIETPEGPNIGLINSLSVYARTNEYGFIETPCRKVVNGRVTDEVEYLSAIEEVDQYIAQSNVELDAQGNILADLVPCRHQNEFSLTTPDKINYMDVSPKQIVSVAASLIPFLEHDDANRALMGSNMQRQAVPTLRSEKPLVGTGMERIVASDSGVSVVAKRGGVIDLVDASRIVVRVNDDETTAGETGVDIYNLTKYFRSNQDTCINQRPIVSTGDRIQRGDVLADGPCTDMGELALGQNLLVAFMPWNGYNFEDSILISERIVHDDRFTTIHIEELTCIARDTKLGTEEITADIPNVGESALSNLDESGVVYIGAEVKAGDILVGKVTPKGETQLTPEEKLLRAIFGEKASDVKDSSLRVPSGMNGTVIDVQVFTRDGLEKDARAKSIEEEHLARVRKDLIDERRIREEDIYHRVSHLLLDKVATGGPGSLKPGSKITQDYLDKVEREKWFDIRIEDDAISQQLEQLSKQLELLTKEMEKRFNDSRKKIIQGDDLAPGVLKIVKVYLAVKRRIQPGDKMAGRHGNKGVISIVVPVEDMPHMEDGTAVDIVLNPLGVPSRMNIGQVLETHLGLAAKGLGRKIAQMLDEKQTPEAIKAYLEKIYNHDGVQRVNLKCLNDDELMTLADNLRAGVPMATPVFDGATEQEIKSMLQLADLPADGKTVLIDGRTGNKFDNPVTVGYMYMLKLNHLVDDKMHARSTGSYSLVTQQPLGGKAQFGGQRFGEMEVWALEAYGAAYTLQEMLTVKSDDVGGRTKIYKNIVDGDHRMDPGMPESFNVLLKEIRALGIDIELEHD.

This sequence belongs to the RNA polymerase beta chain family. The RNAP catalytic core consists of 2 alpha, 1 beta, 1 beta' and 1 omega subunit. When a sigma factor is associated with the core the holoenzyme is formed, which can initiate transcription.

The catalysed reaction is RNA(n) + a ribonucleoside 5'-triphosphate = RNA(n+1) + diphosphate. Functionally, DNA-dependent RNA polymerase catalyzes the transcription of DNA into RNA using the four ribonucleoside triphosphates as substrates. This chain is DNA-directed RNA polymerase subunit beta, found in Legionella pneumophila (strain Lens).